Here is a 491-residue protein sequence, read N- to C-terminus: Ketol-acid reductoisomerase (NADP(+)) (491 aa).

Residues 15–208 enclose the KARI N-terminal Rossmann domain; the sequence is AQLGKCRFMA…GGHRAGVLES (194 aa). NADP(+) is bound by residues 45 to 48, Arg-68, Arg-76, Ser-78, and 108 to 110; these read CGAQ and DKQ. Residue His-132 is part of the active site. Residue Gly-158 participates in NADP(+) binding. KARI C-terminal knotted domains are found at residues 209–344 and 345–484; these read SFVA…TASQ and FDGK…MKDM. Mg(2+)-binding residues include Asp-217, Glu-221, Glu-389, and Glu-393. Residue Ser-414 participates in substrate binding.

It belongs to the ketol-acid reductoisomerase family. The cofactor is Mg(2+).

It catalyses the reaction (2R)-2,3-dihydroxy-3-methylbutanoate + NADP(+) = (2S)-2-acetolactate + NADPH + H(+). The catalysed reaction is (2R,3R)-2,3-dihydroxy-3-methylpentanoate + NADP(+) = (S)-2-ethyl-2-hydroxy-3-oxobutanoate + NADPH + H(+). It functions in the pathway amino-acid biosynthesis; L-isoleucine biosynthesis; L-isoleucine from 2-oxobutanoate: step 2/4. It participates in amino-acid biosynthesis; L-valine biosynthesis; L-valine from pyruvate: step 2/4. Functionally, involved in the biosynthesis of branched-chain amino acids (BCAA). Catalyzes an alkyl-migration followed by a ketol-acid reduction of (S)-2-acetolactate (S2AL) to yield (R)-2,3-dihydroxy-isovalerate. In the isomerase reaction, S2AL is rearranged via a Mg-dependent methyl migration to produce 3-hydroxy-3-methyl-2-ketobutyrate (HMKB). In the reductase reaction, this 2-ketoacid undergoes a metal-dependent reduction by NADPH to yield (R)-2,3-dihydroxy-isovalerate. This chain is Ketol-acid reductoisomerase (NADP(+)), found in Enterobacter sp. (strain 638).